Reading from the N-terminus, the 92-residue chain is UPF0728 protein (92 aa).

The protein belongs to the UPF0728 family.

The chain is UPF0728 protein from Branchiostoma floridae (Florida lancelet).